Reading from the N-terminus, the 490-residue chain is tRNA-guanine(15) transglycosylase (490 aa).

D90 serves as the catalytic Nucleophile. Substrate is bound by residues D125 and A193. Zn(2+)-binding residues include C276, C278, and C281.

The protein belongs to the archaeosine tRNA-ribosyltransferase family. It depends on Zn(2+) as a cofactor.

It catalyses the reaction guanosine(15) in tRNA + 7-cyano-7-deazaguanine = 7-cyano-7-carbaguanosine(15) in tRNA + guanine. It functions in the pathway tRNA modification; archaeosine-tRNA biosynthesis. Functionally, exchanges the guanine residue with 7-cyano-7-deazaguanine (preQ0) at position 15 in the dihydrouridine loop (D-loop) of archaeal tRNAs. This is tRNA-guanine(15) transglycosylase from Methanosarcina acetivorans (strain ATCC 35395 / DSM 2834 / JCM 12185 / C2A).